The chain runs to 476 residues: Lactate utilization protein B (476 aa).

4Fe-4S ferredoxin-type domains follow at residues 304-334 (GTEFQSVLQCIRCAACINVCPVYRHVGGHSY) and 353-382 (YDEYKELPYASSLCAACTEACPVKIPLHEL). Cys-313, Cys-316, Cys-319, Cys-323, Cys-366, Cys-369, and Cys-373 together coordinate [4Fe-4S] cluster.

It belongs to the LutB/YkgF family.

Functionally, is involved in L-lactate degradation and allows cells to grow with lactate as the sole carbon source. Has probably a role as an electron transporter during oxidation of L-lactate. This Bacillus velezensis (strain DSM 23117 / BGSC 10A6 / LMG 26770 / FZB42) (Bacillus amyloliquefaciens subsp. plantarum) protein is Lactate utilization protein B.